Consider the following 408-residue polypeptide: Serine/threonine transporter SstT (408 aa).

Helical transmembrane passes span 14–34, 43–63, 83–103, 143–163, 181–201, 219–239, 247–269, 290–310, and 332–352; these read GNLI…GIFS, IFGA…VFIL, IIFL…SISF, ALSS…GFAL, VLKI…GLVA, LIIL…LIVF, YPLI…SSAA, ISIP…IAIL, and VLAA…LLLI.

Belongs to the dicarboxylate/amino acid:cation symporter (DAACS) (TC 2.A.23) family.

The protein localises to the cell inner membrane. The enzyme catalyses L-serine(in) + Na(+)(in) = L-serine(out) + Na(+)(out). It carries out the reaction L-threonine(in) + Na(+)(in) = L-threonine(out) + Na(+)(out). Functionally, involved in the import of serine and threonine into the cell, with the concomitant import of sodium (symport system). The protein is Serine/threonine transporter SstT of Campylobacter lari (strain RM2100 / D67 / ATCC BAA-1060).